The following is a 443-amino-acid chain: Exodeoxyribonuclease 7 large subunit (443 aa).

This sequence belongs to the XseA family. Heterooligomer composed of large and small subunits.

It is found in the cytoplasm. The enzyme catalyses Exonucleolytic cleavage in either 5'- to 3'- or 3'- to 5'-direction to yield nucleoside 5'-phosphates.. Functionally, bidirectionally degrades single-stranded DNA into large acid-insoluble oligonucleotides, which are then degraded further into small acid-soluble oligonucleotides. The chain is Exodeoxyribonuclease 7 large subunit from Vibrio vulnificus (strain YJ016).